Reading from the N-terminus, the 92-residue chain is Large ribosomal subunit protein bL27 (92 aa).

A propeptide spanning residues 1-9 (MIKANLQLF) is cleaved from the precursor.

The protein belongs to the bacterial ribosomal protein bL27 family. Post-translationally, the N-terminus is cleaved by ribosomal processing cysteine protease Prp.

In Acetivibrio thermocellus (strain ATCC 27405 / DSM 1237 / JCM 9322 / NBRC 103400 / NCIMB 10682 / NRRL B-4536 / VPI 7372) (Clostridium thermocellum), this protein is Large ribosomal subunit protein bL27.